A 900-amino-acid chain; its full sequence is Xylanolytic transcriptional activator xlnR (900 aa).

The segment covering 53 to 71 has biased composition (polar residues); sequence SREGGNSENNSTFKPSSVR. Residues 53–75 are disordered; sequence SREGGNSENNSTFKPSSVRDSLA. The zn(2)-C6 fungal-type DNA-binding region spans 98 to 124; that stretch reads CDQCNQLRTKCDGQNPCAHCIEFGLTC. Disordered regions lie at residues 137-169, 520-559, and 701-722; these read SKKD…QEPG, ELPP…NVTE, and EPPE…STVG. Residues 531 to 542 show a composition bias toward basic and acidic residues; it reads DGERENEGDNPS. The span at 543–557 shows a compositional bias: polar residues; sequence KRNQSLHGGNSNVNV. A compositionally biased stretch (low complexity) spans 712–722; that stretch reads SPSGRSSSTVG.

The protein belongs to the xlnR/xlr1 family.

It is found in the nucleus. In terms of biological role, transcriptional activator of the xylanolytic system. Involved in the regulation of extracellular cellulolytic and xylanolytic genes and in the regulation of the intracellular activities of D-xylose catabolic genes in the pentose catabolic pathway (PCP) in response to the presence of D-xylose. Binds to the DNA sequence 5'-GGNTAAA-3'. This chain is Xylanolytic transcriptional activator xlnR (xlnR), found in Emericella nidulans (strain FGSC A4 / ATCC 38163 / CBS 112.46 / NRRL 194 / M139) (Aspergillus nidulans).